The following is a 388-amino-acid chain: Succinate--CoA ligase [ADP-forming] subunit beta (388 aa).

An ATP-grasp domain is found at 9 to 244; sequence KQLFAEYGLP…PSQEDSREAE (236 aa). ATP-binding positions include K46, 53–55, E99, T102, and E107; that span reads GRG. N199 and D213 together coordinate Mg(2+). Substrate-binding positions include N264 and 321–323; that span reads GIV.

Belongs to the succinate/malate CoA ligase beta subunit family. As to quaternary structure, heterotetramer of two alpha and two beta subunits. Requires Mg(2+) as cofactor.

It catalyses the reaction succinate + ATP + CoA = succinyl-CoA + ADP + phosphate. It carries out the reaction GTP + succinate + CoA = succinyl-CoA + GDP + phosphate. The protein operates within carbohydrate metabolism; tricarboxylic acid cycle; succinate from succinyl-CoA (ligase route): step 1/1. Its function is as follows. Succinyl-CoA synthetase functions in the citric acid cycle (TCA), coupling the hydrolysis of succinyl-CoA to the synthesis of either ATP or GTP and thus represents the only step of substrate-level phosphorylation in the TCA. The beta subunit provides nucleotide specificity of the enzyme and binds the substrate succinate, while the binding sites for coenzyme A and phosphate are found in the alpha subunit. In Marinobacter nauticus (strain ATCC 700491 / DSM 11845 / VT8) (Marinobacter aquaeolei), this protein is Succinate--CoA ligase [ADP-forming] subunit beta.